The sequence spans 142 residues: Autophagy-related protein 31 (142 aa).

It is found in the cytoplasm. Its subcellular location is the cytoskeleton. The protein localises to the preautophagosomal structure. Functionally, plays a role in starvation-induced autophagy. Involved in mitophagy. Functions with ATG17 and ATG29 at the preautophagosomal structure (PAS) in order to form normal autophagosomes under starvation conditions. May be involved in microtubule function, such as chromosome segregation and karyogamy. In Eremothecium gossypii (strain ATCC 10895 / CBS 109.51 / FGSC 9923 / NRRL Y-1056) (Yeast), this protein is Autophagy-related protein 31 (CIS1).